The following is a 206-amino-acid chain: Probable GTP-binding protein EngB (206 aa).

An EngB-type G domain is found at 8 to 195 (RDAEVVLVGR…EECLRTRFHE (188 aa)). Residues 16–23 (GRSNVGKS), 41–45 (GVTRQ), 60–63 (DLPG), 140–143 (NKTD), and 175–177 (ICA) contribute to the GTP site. 2 residues coordinate Mg(2+): serine 23 and threonine 43.

This sequence belongs to the TRAFAC class TrmE-Era-EngA-EngB-Septin-like GTPase superfamily. EngB GTPase family. It depends on Mg(2+) as a cofactor.

Its function is as follows. Necessary for normal cell division and for the maintenance of normal septation. The protein is Probable GTP-binding protein EngB of Halorubrum lacusprofundi (strain ATCC 49239 / DSM 5036 / JCM 8891 / ACAM 34).